The chain runs to 681 residues: MSKKKKTYQNTLSEKEAKKVIAKLADEIRHHQYLYYVKNQPEISDFDFDQLFKRLRDLEEEFPQFKDLNSPTLVVGSDLDKDFEKFQHKLPVLSLINTYNDDELLDWVNKTDPDGLYSVEWKIDGASIVLYYENGMLKNGVTRGSGGIGDDVTDNIRTVRNIPLRLPEPITVYLRGEVFMTFKDFEEFNELSSGKYANPRNLSAGSIKQKNSADTAKRPLRIFTYDATFPGFTKKFKTHQQILSKLEKLTFPVPPDTVFVNGSKIAETIKDFKKKKDTLGFPTDGLVIKLNDISKRDAQGYTSHSPRWARAYKFDAIMKESRIVDITYAVGRTGKITPRVEIEPVNLAGTTVTFATLHNQDYIDELGVGIGAIVRVAKRGEIIPAVEEVITPGKDVFKIPDYCPSCKTKTIKKENLVDLFCPNPDCPDRVKNGIIFYCQRKQMDIEGLGDKQIEFLYDHGYIRSIADLYDLKDQKEKLIEEEGFGEKSLAIIFNGIEHSKQKDFRFLLPSIGLPELGHKVTELLIEHGIDSIDEILSIAKDKKRISSLLEIPGIGPSTIKAFEENFSDKRILKLIARLKNAGLKLKADPIKVSDQQPFAGQSWCVTGSFENFQPRDKAMDLVVYYGGRKVSAVSSKTTHLLAGPGAGSKLEKANELGIVVYNEKQFLDLLKSLKINFKNTI.

NAD(+)-binding positions include 45–49 (DFDFD), 94–95 (SL), and Glu-120. Lys-122 acts as the N6-AMP-lysine intermediate in catalysis. Positions 143, 177, 289, and 313 each coordinate NAD(+). Zn(2+) contacts are provided by Cys-403, Cys-406, Cys-421, and Cys-426. Positions 593 to 681 (SDQQPFAGQS…SLKINFKNTI (89 aa)) constitute a BRCT domain.

The protein belongs to the NAD-dependent DNA ligase family. LigA subfamily. Mg(2+) is required as a cofactor. Mn(2+) serves as cofactor.

It carries out the reaction NAD(+) + (deoxyribonucleotide)n-3'-hydroxyl + 5'-phospho-(deoxyribonucleotide)m = (deoxyribonucleotide)n+m + AMP + beta-nicotinamide D-nucleotide.. In terms of biological role, DNA ligase that catalyzes the formation of phosphodiester linkages between 5'-phosphoryl and 3'-hydroxyl groups in double-stranded DNA using NAD as a coenzyme and as the energy source for the reaction. It is essential for DNA replication and repair of damaged DNA. In Leptospira borgpetersenii serovar Hardjo-bovis (strain L550), this protein is DNA ligase.